Reading from the N-terminus, the 158-residue chain is EOLA-like protein (158 aa).

Positions Leu6 to Thr92 constitute an ASCH domain.

This sequence belongs to the EOLA family.

This chain is EOLA-like protein, found in Pongo abelii (Sumatran orangutan).